The following is a 161-amino-acid chain: Endoribonuclease YbeY (161 aa).

Residues H121, H125, and H131 each coordinate Zn(2+).

Belongs to the endoribonuclease YbeY family. Requires Zn(2+) as cofactor.

The protein localises to the cytoplasm. Its function is as follows. Single strand-specific metallo-endoribonuclease involved in late-stage 70S ribosome quality control and in maturation of the 3' terminus of the 16S rRNA. This is Endoribonuclease YbeY from Xanthomonas campestris pv. campestris (strain 8004).